Reading from the N-terminus, the 5148-residue chain is E3 ubiquitin-protein ligase RNF213 (5148 aa).

Residues 38–48 (DNTLVVSSTPE) are compositionally biased toward polar residues. Residues 38-341 (DNTLVVSSTP…QAAAPEPTSA (304 aa)) are disordered. Residues 69–78 (PGKELEKPEE) show a composition bias toward basic and acidic residues. Positions 101 to 113 (GTISSSEAPSSGL) are enriched in polar residues. Residues 130–146 (PQNQAQQGGAASQPGHP) are compositionally biased toward low complexity. Serine 196 carries the phosphoserine modification. Basic and acidic residues-rich tracts occupy residues 233-245 (SKGE…KKVP), 257-267 (AGKETGEDVRK), and 279-289 (KHGDQEAELKG). Residues 319–335 (AAAVKTQQAAAPQQAAA) are compositionally biased toward low complexity. Residue lysine 1128 forms a Glycyl lysine isopeptide (Lys-Gly) (interchain with G-Cter in SUMO2) linkage. Residues 1957–1962 (GVGKSL), glutamate 2060, alanine 2114, aspartate 2116, and arginine 2177 each bind ATP. Serine 2234 is modified (phosphoserine). ATP contacts are provided by lysine 2460 and serine 2535. A coiled-coil region spans residues 3435–3465 (EEMEIETSQSKELAEEQMEVEDSEEMKKASD). Positions 3947, 3950, 3962, 3964, 3967, 3970, 3982, 3985, 4451, and 4455 each coordinate Zn(2+). The RING-type zinc-finger motif lies at 3947 to 3986 (CFICHGDAQDPVCLPCDHVYCLRCIQTWLIPGQMMCPYCL). The RZ-type zinc-finger motif lies at 4429 to 4501 (MPEDLLVHAR…IRNNEDRTQT (73 aa)). Cysteine 4462 serves as the catalytic Nucleophile; for E3 ubiquitin-lipopolysaccharide ligase activity. Positions 4471 and 4474 each coordinate Zn(2+).

This sequence belongs to the AAA ATPase family. As to quaternary structure, monomer. Interacts with UBE2L3/UBCH7; UBE2L3/UBCH7 is the most efficient ubiquitin-conjugating enzyme E2 for the ubiquitin ligase activity. Interacts with UBE2N/UBC13; promoting 'Lys-63'-linked ubiquitination of target proteins.

It localises to the cytoplasm. Its subcellular location is the cytosol. It is found in the lipid droplet. It carries out the reaction S-ubiquitinyl-[E2 ubiquitin-conjugating enzyme]-L-cysteine + [acceptor protein]-L-lysine = [E2 ubiquitin-conjugating enzyme]-L-cysteine + N(6)-ubiquitinyl-[acceptor protein]-L-lysine.. It catalyses the reaction ATP + H2O = ADP + phosphate + H(+). It functions in the pathway protein modification; protein ubiquitination. In terms of biological role, atypical E3 ubiquitin ligase that can catalyze ubiquitination of both proteins and lipids, and which is involved in various processes, such as lipid metabolism, angiogenesis and cell-autonomous immunity. Acts as a key immune sensor by catalyzing ubiquitination of the lipid A moiety of bacterial lipopolysaccharide (LPS) via its RZ-type zinc-finger: restricts the proliferation of cytosolic bacteria, such as Salmonella, by generating the bacterial ubiquitin coat through the ubiquitination of LPS. Also acts indirectly by mediating the recruitment of the LUBAC complex, which conjugates linear polyubiquitin chains. Ubiquitination of LPS triggers cell-autonomous immunity, such as antibacterial autophagy, leading to degradation of the microbial invader. Involved in lipid metabolism by regulating fat storage and lipid droplet formation; act by inhibiting the lipolytic process. Also regulates lipotoxicity by inhibiting desaturation of fatty acids. Also acts as an E3 ubiquitin-protein ligase via its RING-type zinc finger: mediates 'Lys-63'-linked ubiquitination of target proteins. Involved in the non-canonical Wnt signaling pathway in vascular development: acts by mediating ubiquitination and degradation of FLNA and NFATC2 downstream of RSPO3, leading to inhibit the non-canonical Wnt signaling pathway and promoting vessel regression. Also has ATPase activity; ATPase activity is required for ubiquitination of LPS. The polypeptide is E3 ubiquitin-protein ligase RNF213 (Mus musculus (Mouse)).